The primary structure comprises 480 residues: Endothelial transcription factor GATA-2 (480 aa).

At Ser73 the chain carries Phosphoserine. Arg86 bears the Asymmetric dimethylarginine mark. Positions 166–208 (SGSHLFGFPPTPPKEVSPDPSTTGAASPASSSAGGSVARGEDK) are disordered. Positions 183-201 (PDPSTTGAASPASSSAGGS) are enriched in low complexity. Phosphoserine is present on Ser192. 2 GATA-type zinc fingers span residues 295 to 319 (CVNC…CNAC) and 349 to 373 (CANC…CNAC). Lys389 participates in a covalent cross-link: Glycyl lysine isopeptide (Lys-Gly) (interchain with G-Cter in SUMO2). Residues 457–480 (TPIHPSSSLSFGHPHPSSMVTAMG) are disordered.

As to quaternary structure, interacts with BRD3. Interacts with AR and CCAR1. Interacts with MDFIC.

It localises to the nucleus. Its function is as follows. Transcriptional activator which regulates endothelin-1 gene expression in endothelial cells. Binds to the consensus sequence 5'-AGATAG-3'. The chain is Endothelial transcription factor GATA-2 (Gata2) from Mus musculus (Mouse).